Here is a 512-residue protein sequence, read N- to C-terminus: ADP,ATP carrier protein 4 (512 aa).

Transmembrane regions (helical) follow at residues 34–54 (ISKF…QNLI), 71–91 (ISFL…VMYV), 102–122 (IFYL…YVIF), 157–177 (FSLF…LLFW), 192–212 (FYPL…HFLE), 231–251 (FHTL…IVSI), 296–316 (LIAT…GPWK), 330–350 (AAFI…FVLL), 361–381 (FTSA…FFAF), 390–410 (LIIA…IGAI), 448–468 (VIGT…IFII), and 476–496 (SISI…IWAT).

It belongs to the ADP/ATP translocase tlc family.

Its subcellular location is the cell membrane. In terms of biological role, provides the rickettsial cell with host ATP in exchange for rickettsial ADP. This is an obligate exchange system. This energy acquiring activity is an important component of rickettsial parasitism. The sequence is that of ADP,ATP carrier protein 4 (tlcD) from Rickettsia typhi (strain ATCC VR-144 / Wilmington).